A 348-amino-acid polypeptide reads, in one-letter code: Uroporphyrinogen decarboxylase (348 aa).

Residues 28 to 32 (RQAGR), D78, Y154, T209, and H325 each bind substrate.

Belongs to the uroporphyrinogen decarboxylase family. Homodimer.

It is found in the cytoplasm. The catalysed reaction is uroporphyrinogen III + 4 H(+) = coproporphyrinogen III + 4 CO2. It participates in porphyrin-containing compound metabolism; protoporphyrin-IX biosynthesis; coproporphyrinogen-III from 5-aminolevulinate: step 4/4. Its function is as follows. Catalyzes the decarboxylation of four acetate groups of uroporphyrinogen-III to yield coproporphyrinogen-III. In Rhodopseudomonas palustris (strain BisA53), this protein is Uroporphyrinogen decarboxylase.